The sequence spans 123 residues: Small ribosomal subunit protein uS13c (123 aa).

A disordered region spans residues 90-123; it reads GKRHRNSLPVRGQRTRTNARSRRGAKKTVTGKKK. Positions 102–123 are enriched in basic residues; that stretch reads QRTRTNARSRRGAKKTVTGKKK.

Belongs to the universal ribosomal protein uS13 family. Part of the 30S ribosomal subunit.

It localises to the plastid. The protein resides in the chloroplast. Functionally, located at the top of the head of the 30S subunit, it contacts several helices of the 16S rRNA. This is Small ribosomal subunit protein uS13c from Thalassiosira pseudonana (Marine diatom).